The primary structure comprises 257 residues: Ribosome-inactivating protein charybdin (257 aa).

Residue Glu-167 is part of the active site. A disulfide bridge connects residues Cys-217 and Cys-254.

It belongs to the ribosome-inactivating protein family. Type 1 RIP subfamily.

It carries out the reaction Endohydrolysis of the N-glycosidic bond at one specific adenosine on the 28S rRNA.. Inhibits translation in rabbit reticulocytes. The chain is Ribosome-inactivating protein charybdin from Drimia maritima (Sea squill).